We begin with the raw amino-acid sequence, 923 residues long: Smoothelin (923 aa).

Position 2 is an N-acetylalanine (A2). The stretch at 24–89 (LAERRRIRSA…ARLAGRLESM (66 aa)) forms a coiled coil. The segment at 134–456 (SRLPSSGPRE…GTGEPGGSMK (323 aa)) is disordered. Low complexity-rich tracts occupy residues 164–179 (QEQQTEVLEPTPTPED) and 192–205 (RAPPGGRPSSPASP). Residues 237–252 (LPHPSEAPSPEPPMSP) show a composition bias toward pro residues. 2 stretches are compositionally biased toward polar residues: residues 272-285 (PSDTLDSIRGFSNT) and 293-314 (TKSCQRSLSVLSPRQPTPNREP). Phosphoserine occurs at positions 299, 301, 304, and 340. Phosphothreonine occurs at positions 359 and 372. Low complexity predominate over residues 366 to 389 (PSLISTTPASSSSSNSSSPSPSDT). S501, S521, and S574 each carry phosphoserine. Disordered stretches follow at residues 542–578 (KMEPDPAEPPSTTVEAANGAEQARVDKGPEGRSPLSA) and 615–772 (QRKR…ARKA). Positions 601-628 (EERKLIRAALRELRQRKRDQRDKERERR) form a coiled coil. The segment covering 615 to 638 (QRKRDQRDKERERRLREARARPGE) has biased composition (basic and acidic residues). Residue S641 is modified to Phosphoserine. A compositionally biased stretch (polar residues) spans 674-687 (NDGTQTARTTTVES). The segment covering 697 to 721 (SSSSSTTTTTVQTKSFSSSSSSSSS) has biased composition (low complexity). S735 is modified (phosphoserine). Residues 744 to 756 (LERRQAEKKKELM) are compositionally biased toward basic and acidic residues. Residue S798 is modified to Phosphoserine. Positions 805 to 912 (NSIKQMLLDW…YVQSLYNHLR (108 aa)) constitute a Calponin-homology (CH) domain.

Belongs to the smoothelin family.

It localises to the cytoplasm. The protein localises to the cytoskeleton. Structural protein of the cytoskeleton. The protein is Smoothelin (Smtn) of Mus musculus (Mouse).